The following is a 165-amino-acid chain: uncharacterized protein (165 aa).

A disordered region spans residues 68–107 (LEGAPEWAAPHPEEQRRSPPACSQHTPPLPSTPTGPPPCS). Over residues 94–107 (PPLPSTPTGPPPCS) the composition is skewed to pro residues.

This is an uncharacterized protein from Homo sapiens (Human).